A 64-amino-acid chain; its full sequence is Large ribosomal subunit protein bL35 (64 aa).

Residues 1–29 form a disordered region; the sequence is MPKMKTHSGAKKRFKLTGSGKLRRQQANR.

This sequence belongs to the bacterial ribosomal protein bL35 family.

The protein is Large ribosomal subunit protein bL35 of Pseudarthrobacter chlorophenolicus (strain ATCC 700700 / DSM 12829 / CIP 107037 / JCM 12360 / KCTC 9906 / NCIMB 13794 / A6) (Arthrobacter chlorophenolicus).